A 394-amino-acid chain; its full sequence is Protein LAX PANICLE 2 (394 aa).

The tract at residues 1 to 193 (MVPARSLAHP…PTPRHHHHDV (193 aa)) is disordered. Positions 8–20 (AHPHPHLVRRRRD) are enriched in basic residues. Positions 60 to 84 (QHDPPKQPPPREADDDHHRIQEREP) are enriched in basic and acidic residues. Low complexity-rich tracts occupy residues 90 to 101 (TTTRNQRLQLQL), 119 to 131 (GTSG…SSSN), and 146 to 155 (GPASPGASAG). Residues 170–185 (APQPPTPTPTPTPTPT) show a composition bias toward pro residues.

Interacts with LAX1.

Its subcellular location is the nucleus. Its function is as follows. Involved in the regulation of shoot branching by controlling axillary meristem (AM) formation. Functions in association with LAX1 to regulate the process of AM formation. Possesses transactivation activity in yeast. The polypeptide is Protein LAX PANICLE 2 (Oryza sativa subsp. japonica (Rice)).